The following is a 299-amino-acid chain: MTNDLDLIKLLSPSAMDQIMLYLAFSAMRTGGHRHGAFLDAAATAAKCAIYMTYLEQDGNIRMTGHLHHIEPKRVKAIVEEVRQALTEGKLLKMLGSQEPRYLIQLPYVWMEQYPWQPGRSRVPGTSLTSEEKRQIEQKLPNNLPDAQLINSFQFLELIEFLNTRSQEDLPPEQRMPLSEALAEHIKRRLLYSGTVTRIESPWGMPFYALTRASYSPEDQEERAYVMIEDTARFFRLMQDWAKREDQVMRVLEELDIPDDRVRDAIAELDEILRNWADRYHQEGGKPFVVQMVFGSTET.

Residue Ser-152 is part of the active site.

This sequence belongs to the peptidase S48 family. As to quaternary structure, homodimer; disulfide-linked.

Functionally, might be involved in temporal and/or spatial regulation of nitrogen fixation. Dimerization is required for DNA-binding. Has both a protease and a DNA-binding activity. The polypeptide is DNA-binding transcriptional activator HetR (Leptolyngbya boryana (Plectonema boryanum)).